The sequence spans 663 residues: Protein KINESIN LIGHT CHAIN-RELATED 2 (663 aa).

Basic and acidic residues predominate over residues methionine 1–serine 14. 2 disordered regions span residues methionine 1–leucine 24 and glycine 86–valine 146. Serine 19 bears the Phosphoserine mark. A compositionally biased stretch (basic and acidic residues) spans glycine 86–serine 100. Positions glycine 102–proline 111 are enriched in polar residues. TPR repeat units lie at residues aspartate 147 to alanine 181, valine 200 to glutamate 233, phenylalanine 243 to valine 276, glycine 285 to asparagine 318, alanine 329 to asparagine 363, alanine 369 to glycine 402, alanine 411 to proline 444, alanine 454 to alanine 487, alanine 495 to serine 528, glycine 537 to glutamate 570, and leucine 579 to lysine 612.

This sequence belongs to the kinesin light chain family.

This chain is Protein KINESIN LIGHT CHAIN-RELATED 2, found in Arabidopsis thaliana (Mouse-ear cress).